We begin with the raw amino-acid sequence, 177 residues long: uncharacterized protein (177 aa).

Positions 100 to 115 are enriched in low complexity; sequence QVQPHQQTHQQSQQTH. Positions 100-135 are disordered; that stretch reads QVQPHQQTHQQSQQTHNKTVANSGDPPPPPPSQPNK. A helical transmembrane segment spans residues 141-158; sequence WIVGMVIGVVVLYLLYRY.

It is found in the membrane. This is an uncharacterized protein from Aedes vexans (Inland floodwater mosquito).